A 959-amino-acid chain; its full sequence is Glycine dehydrogenase (decarboxylating) (959 aa).

K708 carries the N6-(pyridoxal phosphate)lysine modification.

The protein belongs to the GcvP family. The glycine cleavage system is composed of four proteins: P, T, L and H. Pyridoxal 5'-phosphate is required as a cofactor.

It catalyses the reaction N(6)-[(R)-lipoyl]-L-lysyl-[glycine-cleavage complex H protein] + glycine + H(+) = N(6)-[(R)-S(8)-aminomethyldihydrolipoyl]-L-lysyl-[glycine-cleavage complex H protein] + CO2. The glycine cleavage system catalyzes the degradation of glycine. The P protein binds the alpha-amino group of glycine through its pyridoxal phosphate cofactor; CO(2) is released and the remaining methylamine moiety is then transferred to the lipoamide cofactor of the H protein. This chain is Glycine dehydrogenase (decarboxylating), found in Yersinia pseudotuberculosis serotype O:1b (strain IP 31758).